The sequence spans 162 residues: Mitochondrial fission process protein 1 (162 aa).

The next 3 membrane-spanning stretches (helical) occupy residues 36 to 56, 81 to 101, and 128 to 148; these read SLVK…YVAA, AIIA…IPGF, and TVTA…DAFV.

It belongs to the MTFP1 family.

It localises to the mitochondrion inner membrane. Functionally, involved in the mitochondrial division probably by regulating membrane fission. Loss-of-function leads to apoptosis. This is Mitochondrial fission process protein 1 from Caenorhabditis briggsae.